Consider the following 356-residue polypeptide: Dihydroorotate dehydrogenase (quinone) (356 aa).

Residues 66–70 (AGFDK) and Thr-90 contribute to the FMN site. Lys-70 is a binding site for substrate. Residue 115–119 (NRMGF) participates in substrate binding. FMN contacts are provided by Asn-143 and Asn-176. A substrate-binding site is contributed by Asn-176. The active-site Nucleophile is Ser-179. Asn-181 serves as a coordination point for substrate. 2 residues coordinate FMN: Lys-212 and Thr-240. Position 241-242 (241-242 (NT)) interacts with substrate. Residues Gly-264, Gly-293, and 314–315 (YT) each bind FMN.

Belongs to the dihydroorotate dehydrogenase family. Type 2 subfamily. In terms of assembly, monomer. Requires FMN as cofactor.

The protein localises to the cell membrane. It carries out the reaction (S)-dihydroorotate + a quinone = orotate + a quinol. It participates in pyrimidine metabolism; UMP biosynthesis via de novo pathway; orotate from (S)-dihydroorotate (quinone route): step 1/1. Catalyzes the conversion of dihydroorotate to orotate with quinone as electron acceptor. This is Dihydroorotate dehydrogenase (quinone) (pyrD) from Mycobacterium leprae (strain TN).